The chain runs to 88 residues: Large ribosomal subunit protein bL27 (88 aa).

Residues 1-24 (MATKKSGGSSGNGRDSRGRRLGVK) are disordered.

Belongs to the bacterial ribosomal protein bL27 family.

This is Large ribosomal subunit protein bL27 from Ehrlichia chaffeensis (strain ATCC CRL-10679 / Arkansas).